The sequence spans 300 residues: Acetyl-coenzyme A carboxylase carboxyl transferase subunit beta 1 (300 aa).

Positions 26-294 (MWVKCPSCGD…HTSAAQHVPA (269 aa)) constitute a CoA carboxyltransferase N-terminal domain. Zn(2+)-binding residues include Cys-30, Cys-33, Cys-49, and Cys-51. The segment at 30-51 (CPSCGDLIYTRQFSDNLKVCKC) adopts a C4-type zinc-finger fold.

Belongs to the AccD/PCCB family. Acetyl-CoA carboxylase is a heterohexamer composed of biotin carboxyl carrier protein (AccB), biotin carboxylase (AccC) and two subunits each of ACCase subunit alpha (AccA) and ACCase subunit beta (AccD). Requires Zn(2+) as cofactor.

It is found in the cytoplasm. It catalyses the reaction N(6)-carboxybiotinyl-L-lysyl-[protein] + acetyl-CoA = N(6)-biotinyl-L-lysyl-[protein] + malonyl-CoA. The protein operates within lipid metabolism; malonyl-CoA biosynthesis; malonyl-CoA from acetyl-CoA: step 1/1. Component of the acetyl coenzyme A carboxylase (ACC) complex. Biotin carboxylase (BC) catalyzes the carboxylation of biotin on its carrier protein (BCCP) and then the CO(2) group is transferred by the transcarboxylase to acetyl-CoA to form malonyl-CoA. This is Acetyl-coenzyme A carboxylase carboxyl transferase subunit beta 1 from Roseiflexus sp. (strain RS-1).